The primary structure comprises 579 residues: Vitamin B6 transporter TPN1 (579 aa).

The Cytoplasmic segment spans residues 1–98 (MNRDNMDTTK…LHVAGLWLSA (98 aa)). A helical transmembrane segment spans residues 99-119 (TGGLSSMSSFLLGPLLFGLSF). Residues 120-122 (RES) lie on the Extracellular side of the membrane. The helical transmembrane segment at 123–143 (VASSLISVTIGCLIAAYCSIM) threads the bilayer. The Cytoplasmic portion of the chain corresponds to 144–157 (GPQSGCRQMVTARY). Residues 158 to 178 (LFGWWFVKLVALASIIGVMGW) traverse the membrane as a helical segment. Over 179 to 198 (SVVNSVVGGEMLAAISNDKV) the chain is Extracellular. A helical membrane pass occupies residues 199–219 (PLWVGIVIVTVCSFLVAIFGI). At 220–221 (KQ) the chain is on the cytoplasmic side. The chain crosses the membrane as a helical span at residues 222-242 (VIKVETYLSVPVLTAFLLLYI). Residues 243–274 (SSSDKYSFVNAYVSKGNLDSSTRKGNWMSFFS) lie on the Extracellular side of the membrane. The chain crosses the membrane as a helical span at residues 275–295 (LCYSITATWGSITADYYILFP). Residues 296–302 (EDTPYIQ) lie on the Cytoplasmic side of the membrane. A helical transmembrane segment spans residues 303–323 (IFCLTFFGTFLPTCFVGILGL). Over 324 to 362 (LLASVAMSYKPWSVEYDSHGMGGLLWAGFQRWNGFGKFC) the chain is Extracellular. A helical transmembrane segment spans residues 363–383 (VVVLVFSLVSNNIINTYSAAF). The Cytoplasmic portion of the chain corresponds to 384-394 (SIQLSSVFCAK). Residues 395–415 (IPRWFWSIVCTIICLVCALIG) form a helical membrane-spanning segment. Residues 416–421 (RNHFST) lie on the Extracellular side of the membrane. A helical membrane pass occupies residues 422-442 (ILGNFLPMIGYWISMYFILLF). Topologically, residues 443–519 (EENLVFRRFF…EVLTHGYAAT (77 aa)) are cytoplasmic. Residues 520–540 (FAFIVGVAGVVVGMAQAYWIG) traverse the membrane as a helical segment. Topologically, residues 541 to 545 (PIAAK) are extracellular. Residues 546-566 (FGEYGGDVAMWLSMAFSGVVY) traverse the membrane as a helical segment. Residues 567–579 (PPCRYLELRKFGR) are Cytoplasmic-facing.

The protein belongs to the purine-cytosine permease (2.A.39) family.

It localises to the membrane. Thiamine-regulated, high affinity import carrier of pyridoxine, pyridoxal and pyridoxamine. The chain is Vitamin B6 transporter TPN1 (TPN1) from Saccharomyces cerevisiae (strain ATCC 204508 / S288c) (Baker's yeast).